The primary structure comprises 305 residues: Nucleotide-binding protein Mpe_A3336 (305 aa).

22–29 (GISGSGKS) lines the ATP pocket. A GTP-binding site is contributed by 74-77 (DVRS).

It belongs to the RapZ-like family.

Displays ATPase and GTPase activities. This is Nucleotide-binding protein Mpe_A3336 from Methylibium petroleiphilum (strain ATCC BAA-1232 / LMG 22953 / PM1).